A 300-amino-acid polypeptide reads, in one-letter code: Heme A synthase (300 aa).

The Cytoplasmic segment spans residues 1-8 (MLKEKNLK). A helical membrane pass occupies residues 9 to 29 (WLSLFTTVLMLFVQIGGALVT). Residues 30-64 (KTGSADGCGSSWPLCHGKFVPTHIPKETLIELAHR) lie on the Extracellular side of the membrane. Residues C37 and C44 are joined by a disulfide bond. E60 is an active-site residue. H63 contributes to the heme o binding site. The helical transmembrane segment at 65–85 (GVSGLALLSVTWLVILSIKYI) threads the bilayer. Residues 86–92 (GHKKETK) lie on the Cytoplasmic side of the membrane. Residues 93–113 (FLCYMSIGFIFAQALIGAAAV) traverse the membrane as a helical segment. The Extracellular portion of the chain corresponds to 114-123 (MWQQNGFVLA). The chain crosses the membrane as a helical span at residues 124 to 144 (LHFGISLISFSAVFLLTLLIF). H125 is a binding site for heme o. The Cytoplasmic segment spans residues 145–163 (EVDQKFDATKLILQPKLRR). A helical transmembrane segment spans residues 164 to 184 (HTIGLTSFIYFVIYSGALVRH). Residues 185-218 (EKASLACSSWPLCRKGAFILPQNFYEWVQMSHRT) lie on the Extracellular side of the membrane. Residues C191 and C197 are joined by a disulfide bond. H216 is a binding site for heme b. Residues 219-239 (LAFILFIWLTYVAFHAMRNYA) traverse the membrane as a helical segment. Topologically, residues 240–249 (QYRVIKYGYM) are cytoplasmic. A helical membrane pass occupies residues 250–270 (IAFILICLQVTTGALTIFTAV). The Extracellular portion of the chain corresponds to 271–275 (NLYIA). Residues 276–296 (LLHALFITLLFGLLCYFILLI) form a helical membrane-spanning segment. Heme b is bound at residue H278. At 297–300 (SRAK) the chain is on the cytoplasmic side.

The protein belongs to the COX15/CtaA family. Type 1 subfamily. Interacts with CtaB. The cofactor is heme b.

Its subcellular location is the cell membrane. The catalysed reaction is Fe(II)-heme o + 2 A + H2O = Fe(II)-heme a + 2 AH2. Its pathway is porphyrin-containing compound metabolism; heme A biosynthesis; heme A from heme O: step 1/1. Its function is as follows. Catalyzes the conversion of heme O to heme A by two successive hydroxylations of the methyl group at C8. The first hydroxylation forms heme I, the second hydroxylation results in an unstable dihydroxymethyl group, which spontaneously dehydrates, resulting in the formyl group of heme A. The chain is Heme A synthase from Macrococcus caseolyticus (strain JCSC5402) (Macrococcoides caseolyticum).